We begin with the raw amino-acid sequence, 544 residues long: MVSLLRCQSSKPYSSLICSLALGVAFALSGTAYAEETKPTETVPAPVVTPPKVTPPPATKNQVRFTKTGAFDSDYVVKLARKLAAKPYSVLKDPLPVGLAKLTYDEYRDIRFNPTASIWRDQGLPFQMQMFHRGFYFQDLIEIAIVEGNKATHLAYEPKYFTAGEVITQALPNDDIGYSGFRIHNQLNNNGVFDELMVFQGASYFRALGKGNAYGLSARGLALKTADPEGEEFPIFRAFWVERPHYDSNLIVVHALLDSPSVAGAYRFSVRPGDNTQIDVEATLFPRVELSKVGLAPSTSMFLHSLNGRHDTDDFRPEVHDSDGLLMFNGRGEHLWRPLANPRQLQVSAFSDNSPQGFGLIQRERSYAAYQDLEAQYERRPSLWIEPVGNWGQGAVVLTEIPTESEIHDNIVSFWKPRQPIPAGSEYHFAYRMSWGEEPAVKHNYVVVSRTASGRADIAKPTPRRLFVVDYQVNGAMPEELPLAKVEASGGIISNVVIAPNAANNGYRLAFELEPEGKELIELRAELKFPTPRQVETWLYRWTL.

A signal peptide spans 1–34; that stretch reads MVSLLRCQSSKPYSSLICSLALGVAFALSGTAYA.

The protein belongs to the OpgD/OpgG family.

The protein localises to the periplasm. Its pathway is glycan metabolism; osmoregulated periplasmic glucan (OPG) biosynthesis. In terms of biological role, involved in the biosynthesis of osmoregulated periplasmic glucans (OPGs). The sequence is that of Glucans biosynthesis protein G from Shewanella putrefaciens (strain CN-32 / ATCC BAA-453).